A 409-amino-acid polypeptide reads, in one-letter code: Phosphatidylserine decarboxylase proenzyme, mitochondrial (409 aa).

Residues 1–52 constitute a mitochondrion transit peptide; sequence MATSVGHRCLGLLHGVAPWRSSLHPCEITALSQSLQPLRKLPFRAFRTDARK. The tract at residues 36-103 is necessary for localization to both lipid droplets and mitochondria; that stretch reads QPLRKLPFRA…LGLEIPPKLA (68 aa). Over 53 to 63 the chain is Mitochondrial matrix; sequence IHTAPARTMFL. Residues 64–82 traverse the membrane as a helical segment; sequence LRPLPILLVTGGGYAGYRQ. The Mitochondrial intermembrane segment spans residues 83–409; the sequence is YEKYRERELE…IRFGEALGSL (327 aa). Catalysis depends on charge relay system; for autoendoproteolytic cleavage activity residues Asp-191, His-267, and Ser-378. The active-site Schiff-base intermediate with substrate; via pyruvic acid; for decarboxylase activity is Ser-378. Ser-378 carries the post-translational modification Pyruvic acid (Ser); by autocatalysis.

It belongs to the phosphatidylserine decarboxylase family. PSD-B subfamily. Eukaryotic type I sub-subfamily. In terms of assembly, heterodimer of a large membrane-associated beta subunit and a small pyruvoyl-containing alpha subunit. Pyruvate is required as a cofactor. Is synthesized initially as an inactive proenzyme. Formation of the active enzyme involves a self-maturation process in which the active site pyruvoyl group is generated from an internal serine residue via an autocatalytic post-translational modification. Two non-identical subunits are generated from the proenzyme in this reaction, and the pyruvate is formed at the N-terminus of the alpha chain, which is derived from the carboxyl end of the proenzyme. The autoendoproteolytic cleavage occurs by a canonical serine protease mechanism, in which the side chain hydroxyl group of the serine supplies its oxygen atom to form the C-terminus of the beta chain, while the remainder of the serine residue undergoes an oxidative deamination to produce ammonia and the pyruvoyl prosthetic group on the alpha chain. During this reaction, the Ser that is part of the protease active site of the proenzyme becomes the pyruvoyl prosthetic group, which constitutes an essential element of the active site of the mature decarboxylase.

Its subcellular location is the mitochondrion inner membrane. The protein localises to the cytoplasm. It localises to the lipid droplet. The enzyme catalyses a 1,2-diacyl-sn-glycero-3-phospho-L-serine + H(+) = a 1,2-diacyl-sn-glycero-3-phosphoethanolamine + CO2. It participates in phospholipid metabolism; phosphatidylethanolamine biosynthesis. Functionally, catalyzes the formation of phosphatidylethanolamine (PtdEtn) from phosphatidylserine (PtdSer). Plays a central role in phospholipid metabolism and in the interorganelle trafficking of phosphatidylserine. May be involved in lipid droplet biogenesis at the endoplasmic reticulum membrane. The chain is Phosphatidylserine decarboxylase proenzyme, mitochondrial from Homo sapiens (Human).